Reading from the N-terminus, the 113-residue chain is CRISPR-associated endoribonuclease Cas2 2 (113 aa).

Asp-32 is a binding site for Mg(2+).

This sequence belongs to the CRISPR-associated endoribonuclease Cas2 protein family. In terms of assembly, homodimer, forms a heterotetramer with a Cas1 homodimer. Mg(2+) is required as a cofactor.

CRISPR (clustered regularly interspaced short palindromic repeat), is an adaptive immune system that provides protection against mobile genetic elements (viruses, transposable elements and conjugative plasmids). CRISPR clusters contain sequences complementary to antecedent mobile elements and target invading nucleic acids. CRISPR clusters are transcribed and processed into CRISPR RNA (crRNA). Functions as a ssRNA-specific endoribonuclease. Involved in the integration of spacer DNA into the CRISPR cassette. In Nitrosomonas europaea (strain ATCC 19718 / CIP 103999 / KCTC 2705 / NBRC 14298), this protein is CRISPR-associated endoribonuclease Cas2 2 (cas22).